Reading from the N-terminus, the 155-residue chain is SsrA-binding protein (155 aa).

It belongs to the SmpB family.

It is found in the cytoplasm. In terms of biological role, required for rescue of stalled ribosomes mediated by trans-translation. Binds to transfer-messenger RNA (tmRNA), required for stable association of tmRNA with ribosomes. tmRNA and SmpB together mimic tRNA shape, replacing the anticodon stem-loop with SmpB. tmRNA is encoded by the ssrA gene; the 2 termini fold to resemble tRNA(Ala) and it encodes a 'tag peptide', a short internal open reading frame. During trans-translation Ala-aminoacylated tmRNA acts like a tRNA, entering the A-site of stalled ribosomes, displacing the stalled mRNA. The ribosome then switches to translate the ORF on the tmRNA; the nascent peptide is terminated with the 'tag peptide' encoded by the tmRNA and targeted for degradation. The ribosome is freed to recommence translation, which seems to be the essential function of trans-translation. The chain is SsrA-binding protein from Halothermothrix orenii (strain H 168 / OCM 544 / DSM 9562).